The following is a 124-amino-acid chain: Large ribosomal subunit protein bL12 (124 aa).

This sequence belongs to the bacterial ribosomal protein bL12 family. In terms of assembly, homodimer. Part of the ribosomal stalk of the 50S ribosomal subunit. Forms a multimeric L10(L12)X complex, where L10 forms an elongated spine to which 2 to 4 L12 dimers bind in a sequential fashion. Binds GTP-bound translation factors.

In terms of biological role, forms part of the ribosomal stalk which helps the ribosome interact with GTP-bound translation factors. Is thus essential for accurate translation. This Allorhizobium ampelinum (strain ATCC BAA-846 / DSM 112012 / S4) (Agrobacterium vitis (strain S4)) protein is Large ribosomal subunit protein bL12.